The following is a 403-amino-acid chain: Enoyl-[acyl-carrier-protein] reductase [NADH] (403 aa).

NAD(+) contacts are provided by residues G49–Y54, F75–E76, D112–A113, and L141–A142. Y227 is a binding site for substrate. Catalysis depends on Y237, which acts as the Proton donor. NAD(+) contacts are provided by residues K246 and V276–T278.

It belongs to the TER reductase family. In terms of assembly, monomer.

It catalyses the reaction a 2,3-saturated acyl-[ACP] + NAD(+) = a (2E)-enoyl-[ACP] + NADH + H(+). Its pathway is lipid metabolism; fatty acid biosynthesis. Functionally, involved in the final reduction of the elongation cycle of fatty acid synthesis (FAS II). Catalyzes the reduction of a carbon-carbon double bond in an enoyl moiety that is covalently linked to an acyl carrier protein (ACP). The sequence is that of Enoyl-[acyl-carrier-protein] reductase [NADH] from Pseudomonas putida (strain ATCC 47054 / DSM 6125 / CFBP 8728 / NCIMB 11950 / KT2440).